Reading from the N-terminus, the 304-residue chain is Protein pxr1 (304 aa).

Over residues 1–11 the composition is skewed to basic residues; sequence MGLAAPRKKTK. 3 disordered regions span residues 1–25, 144–238, and 256–276; these read MGLAAPRKKTKISHDPNNTSWSRST, NATA…DTET, and TSLLASNGPSTSRERQPMGRR. Polar residues predominate over residues 15–25; sequence DPNNTSWSRST. The 55-residue stretch at 25–79 folds into the G-patch domain; the sequence is TDGFGHRILKAQGWTPGDFLGARNATHSDLFTTASASHIRVVLKDDTLGLGARPK. 2 stretches are compositionally biased toward basic and acidic residues: residues 154 to 170 and 204 to 238; these read LRVDFPRETSSNEHENG and GKEMDMSPRKSREKKQEKIQKKRKIGDCDRLDTET. Positions 256-266 are enriched in polar residues; the sequence is TSLLASNGPST.

This sequence belongs to the PINX1 family.

Its subcellular location is the nucleus. The protein resides in the nucleolus. Involved in rRNA-processing at A0, A1 and A2 sites and negatively regulates telomerase. The chain is Protein pxr1 (pxr1) from Aspergillus fumigatus (strain ATCC MYA-4609 / CBS 101355 / FGSC A1100 / Af293) (Neosartorya fumigata).